The chain runs to 351 residues: 3-dehydroquinate synthase (351 aa).

Residues Asp60–Lys65, Gly94–Asp98, Thr118–Thr119, Lys131, Lys140, and Phe158–Thr161 each bind NAD(+). Zn(2+) contacts are provided by Glu173, His239, and His256.

The protein belongs to the sugar phosphate cyclases superfamily. Dehydroquinate synthase family. Co(2+) serves as cofactor. It depends on Zn(2+) as a cofactor. The cofactor is NAD(+).

It is found in the cytoplasm. It carries out the reaction 7-phospho-2-dehydro-3-deoxy-D-arabino-heptonate = 3-dehydroquinate + phosphate. The protein operates within metabolic intermediate biosynthesis; chorismate biosynthesis; chorismate from D-erythrose 4-phosphate and phosphoenolpyruvate: step 2/7. Catalyzes the conversion of 3-deoxy-D-arabino-heptulosonate 7-phosphate (DAHP) to dehydroquinate (DHQ). This is 3-dehydroquinate synthase from Campylobacter jejuni subsp. doylei (strain ATCC BAA-1458 / RM4099 / 269.97).